The chain runs to 192 residues: NAD(P)H-quinone oxidoreductase subunit J, organellar chromatophore (192 aa).

Belongs to the complex I 30 kDa subunit family. NDH is composed of at least 16 different subunits, 5 of which are encoded in the nucleus.

Its subcellular location is the plastid. The protein localises to the organellar chromatophore thylakoid membrane. It catalyses the reaction a quinone + NADH + H(+) = a quinol + NAD(+). Its function is as follows. NDH-1 shuttles electrons from NADH, via FMN and iron-sulfur (Fe-S) centers, to quinones in the respiratory chain. Couples the redox reaction to proton translocation (for every two electrons transferred, four hydrogen ions are translocated across the cytoplasmic membrane), and thus conserves the redox energy in a proton gradient. The protein is NAD(P)H-quinone oxidoreductase subunit J, organellar chromatophore of Paulinella chromatophora.